A 249-amino-acid polypeptide reads, in one-letter code: Type III pantothenate kinase (249 aa).

6 to 13 (DCGNSFIK) is an ATP binding site. Substrate contacts are provided by residues Tyr-93 and 100 to 103 (GLDR). Asp-102 functions as the Proton acceptor in the catalytic mechanism. Asp-122 is a binding site for K(+). Thr-125 lines the ATP pocket. Thr-181 contacts substrate.

It belongs to the type III pantothenate kinase family. Homodimer. It depends on NH4(+) as a cofactor. K(+) is required as a cofactor.

It localises to the cytoplasm. The catalysed reaction is (R)-pantothenate + ATP = (R)-4'-phosphopantothenate + ADP + H(+). Its pathway is cofactor biosynthesis; coenzyme A biosynthesis; CoA from (R)-pantothenate: step 1/5. In terms of biological role, catalyzes the phosphorylation of pantothenate (Pan), the first step in CoA biosynthesis. The polypeptide is Type III pantothenate kinase (Pseudomonas fluorescens (strain SBW25)).